Consider the following 197-residue polypeptide: Glycerol-3-phosphate acyltransferase (197 aa).

Transmembrane regions (helical) follow at residues 6 to 26 (LFIVLLLLSYLIGSISTAIIV), 58 to 78 (AITLIGDGLKGAIPVLIAHYL), 82 to 102 (MLNVTWVILVTFLGHVYPIFF), 116 to 136 (ALLALSYLTGLSFIITWVFVA), and 157 to 177 (FYLITNNLASTYVIILICLWI).

It belongs to the PlsY family. Probably interacts with PlsX.

It localises to the cell inner membrane. The enzyme catalyses an acyl phosphate + sn-glycerol 3-phosphate = a 1-acyl-sn-glycero-3-phosphate + phosphate. It functions in the pathway lipid metabolism; phospholipid metabolism. In terms of biological role, catalyzes the transfer of an acyl group from acyl-phosphate (acyl-PO(4)) to glycerol-3-phosphate (G3P) to form lysophosphatidic acid (LPA). This enzyme utilizes acyl-phosphate as fatty acyl donor, but not acyl-CoA or acyl-ACP. This chain is Glycerol-3-phosphate acyltransferase, found in Ruthia magnifica subsp. Calyptogena magnifica.